Consider the following 41-residue polypeptide: MKVRNSLKSLLTRHRENRLVRRKGRLYVINKTQRRFKARQG.

It belongs to the bacterial ribosomal protein bL36 family.

The polypeptide is Large ribosomal subunit protein bL36 (Rhodopseudomonas palustris (strain TIE-1)).